A 530-amino-acid polypeptide reads, in one-letter code: Glucose-6-phosphate isomerase (530 aa).

Residue E322 is the Proton donor of the active site. Active-site residues include H351 and K455.

This sequence belongs to the GPI family.

The protein resides in the cytoplasm. The catalysed reaction is alpha-D-glucose 6-phosphate = beta-D-fructose 6-phosphate. It functions in the pathway carbohydrate biosynthesis; gluconeogenesis. It participates in carbohydrate degradation; glycolysis; D-glyceraldehyde 3-phosphate and glycerone phosphate from D-glucose: step 2/4. In terms of biological role, catalyzes the reversible isomerization of glucose-6-phosphate to fructose-6-phosphate. In Geotalea daltonii (strain DSM 22248 / JCM 15807 / FRC-32) (Geobacter daltonii), this protein is Glucose-6-phosphate isomerase.